The chain runs to 110 residues: Mobility group protein 1B (110 aa).

Residues 5 to 71 (PKRPLSAYML…NYIRALQEYE (67 aa)) constitute a DNA-binding region (HMG box). Over residues 71–81 (ERNGGGGDDKG) the composition is skewed to basic and acidic residues. The disordered stretch occupies residues 71-110 (ERNGGGGDDKGKKRKGAAPKKGAGKKSKKGAHSDDDGDSE). Residues 82 to 100 (KKRKGAAPKKGAGKKSKKG) are compositionally biased toward basic residues.

This sequence belongs to the HMGB family.

The protein resides in the nucleus. It is found in the chromosome. In terms of biological role, found in condensed chromomeres. Binds preferentially to AT-rich DNA. In Chironomus tentans (Midge), this protein is Mobility group protein 1B (HMG1B).